Reading from the N-terminus, the 312-residue chain is Ribosomal protein L11 methyltransferase (312 aa).

Residues Thr-160, Gly-181, Asp-203, and Asn-246 each contribute to the S-adenosyl-L-methionine site.

This sequence belongs to the methyltransferase superfamily. PrmA family.

Its subcellular location is the cytoplasm. It carries out the reaction L-lysyl-[protein] + 3 S-adenosyl-L-methionine = N(6),N(6),N(6)-trimethyl-L-lysyl-[protein] + 3 S-adenosyl-L-homocysteine + 3 H(+). Methylates ribosomal protein L11. This chain is Ribosomal protein L11 methyltransferase, found in Staphylococcus saprophyticus subsp. saprophyticus (strain ATCC 15305 / DSM 20229 / NCIMB 8711 / NCTC 7292 / S-41).